We begin with the raw amino-acid sequence, 510 residues long: Maturase K (510 aa).

The protein belongs to the intron maturase 2 family. MatK subfamily.

The protein resides in the plastid. Its subcellular location is the chloroplast. Its function is as follows. Usually encoded in the trnK tRNA gene intron. Probably assists in splicing its own and other chloroplast group II introns. In Penstemon heterophyllus (Foothill penstemon), this protein is Maturase K.